The chain runs to 445 residues: Proline--tRNA ligase (445 aa).

Belongs to the class-II aminoacyl-tRNA synthetase family. ProS type 2 subfamily. Homodimer.

The protein resides in the cytoplasm. It catalyses the reaction tRNA(Pro) + L-proline + ATP = L-prolyl-tRNA(Pro) + AMP + diphosphate. Its function is as follows. Catalyzes the attachment of proline to tRNA(Pro) in a two-step reaction: proline is first activated by ATP to form Pro-AMP and then transferred to the acceptor end of tRNA(Pro). This Dinoroseobacter shibae (strain DSM 16493 / NCIMB 14021 / DFL 12) protein is Proline--tRNA ligase.